We begin with the raw amino-acid sequence, 374 residues long: Coiled-coil domain-containing protein 89 (374 aa).

A disordered region spans residues 1-40 (MRAPMLQKQQAPRMDTPPPEERLEKQNEKLNNQEEETEFK). Residue Thr-16 is modified to Phosphothreonine. Over residues 19-32 (PEERLEKQNEKLNN) the composition is skewed to basic and acidic residues. Residues 20 to 351 (EERLEKQNEK…DELRLQSEAF (332 aa)) are a coiled coil.

Belongs to the CCDC89 family. Interacts with HEY1.

The protein localises to the cytoplasm. Its subcellular location is the nucleus. This Homo sapiens (Human) protein is Coiled-coil domain-containing protein 89 (CCDC89).